A 226-amino-acid polypeptide reads, in one-letter code: 2-C-methyl-D-erythritol 4-phosphate cytidylyltransferase (226 aa).

This sequence belongs to the IspD/TarI cytidylyltransferase family. IspD subfamily.

The enzyme catalyses 2-C-methyl-D-erythritol 4-phosphate + CTP + H(+) = 4-CDP-2-C-methyl-D-erythritol + diphosphate. Its pathway is isoprenoid biosynthesis; isopentenyl diphosphate biosynthesis via DXP pathway; isopentenyl diphosphate from 1-deoxy-D-xylulose 5-phosphate: step 2/6. Its function is as follows. Catalyzes the formation of 4-diphosphocytidyl-2-C-methyl-D-erythritol from CTP and 2-C-methyl-D-erythritol 4-phosphate (MEP). In Bacillus cytotoxicus (strain DSM 22905 / CIP 110041 / 391-98 / NVH 391-98), this protein is 2-C-methyl-D-erythritol 4-phosphate cytidylyltransferase.